The sequence spans 204 residues: Somatotropin (204 aa).

Residues 1–17 (MDRVVLMLSVMSLGVSS) form the signal peptide. At Gln18 the chain carries Pyrrolidone carboxylic acid. Position 36 (His36) interacts with Zn(2+). Cys69 and Cys177 are disulfide-bonded. Zn(2+) is bound at residue Glu186. Cys194 and Cys202 form a disulfide bridge.

The protein belongs to the somatotropin/prolactin family.

Its subcellular location is the secreted. In terms of biological role, growth hormone plays an important role in growth control and is involved in the regulation of several anabolic processes. Implicated as an osmoregulatory substance important for seawater adaptation. The polypeptide is Somatotropin (gh) (Sparus aurata (Gilthead sea bream)).